The primary structure comprises 273 residues: Thiazole synthase (273 aa).

The Schiff-base intermediate with DXP role is filled by lysine 111. 1-deoxy-D-xylulose 5-phosphate is bound by residues glycine 172, 198 to 199, and 220 to 221; these read AG and NS. Residues 251–273 are disordered; sequence RLPRRGQASASSPTTGLISGKDK. The span at 258–267 shows a compositional bias: polar residues; it reads ASASSPTTGL.

Belongs to the ThiG family. Homotetramer. Forms heterodimers with either ThiH or ThiS.

Its subcellular location is the cytoplasm. It catalyses the reaction [ThiS sulfur-carrier protein]-C-terminal-Gly-aminoethanethioate + 2-iminoacetate + 1-deoxy-D-xylulose 5-phosphate = [ThiS sulfur-carrier protein]-C-terminal Gly-Gly + 2-[(2R,5Z)-2-carboxy-4-methylthiazol-5(2H)-ylidene]ethyl phosphate + 2 H2O + H(+). It functions in the pathway cofactor biosynthesis; thiamine diphosphate biosynthesis. Its function is as follows. Catalyzes the rearrangement of 1-deoxy-D-xylulose 5-phosphate (DXP) to produce the thiazole phosphate moiety of thiamine. Sulfur is provided by the thiocarboxylate moiety of the carrier protein ThiS. In vitro, sulfur can be provided by H(2)S. The chain is Thiazole synthase from Synechococcus sp. (strain CC9902).